Here is a 116-residue protein sequence, read N- to C-terminus: Large ribosomal subunit protein bL17 (116 aa).

The protein belongs to the bacterial ribosomal protein bL17 family. In terms of assembly, part of the 50S ribosomal subunit. Contacts proteins L3 and L32.

Its function is as follows. Binds to the 23S rRNA. This chain is Large ribosomal subunit protein bL17, found in Deinococcus radiodurans (strain ATCC 13939 / DSM 20539 / JCM 16871 / CCUG 27074 / LMG 4051 / NBRC 15346 / NCIMB 9279 / VKM B-1422 / R1).